The chain runs to 314 residues: Probable cell division protein WhiA (314 aa).

A DNA-binding region (H-T-H motif) is located at residues 274-305 (SLAELGDRLEISKSGANHRMRKLKALEDMINA).

Belongs to the WhiA family.

Involved in cell division and chromosome segregation. In Leuconostoc citreum (strain KM20), this protein is Probable cell division protein WhiA.